Consider the following 451-residue polypeptide: Tubulin beta-1 chain (451 aa).

Positions 1–4 (MREI) match the MREI motif motif. Positions 11, 69, 138, 142, 143, and 144 each coordinate GTP. Position 69 (Glu-69) interacts with Mg(2+). Ser-172 is subject to Phosphoserine; by CDK1. The GTP site is built by Asn-204 and Asn-226. The segment at 430 to 451 (AGLEDSEEDVEEAEVEAEDKDH) is disordered. A compositionally biased stretch (acidic residues) spans 433-451 (EDSEEDVEEAEVEAEDKDH). Ser-435 is subject to Phosphoserine. At Glu-440 the chain carries 5-glutamyl polyglutamate.

It belongs to the tubulin family. Dimer of alpha and beta chains. A typical microtubule is a hollow water-filled tube with an outer diameter of 25 nm and an inner diameter of 15 nM. Alpha-beta heterodimers associate head-to-tail to form protofilaments running lengthwise along the microtubule wall with the beta-tubulin subunit facing the microtubule plus end conferring a structural polarity. Microtubules usually have 13 protofilaments but different protofilament numbers can be found in some organisms and specialized cells. Interacts with RANBP10. It depends on Mg(2+) as a cofactor. Some glutamate residues at the C-terminus are polyglycylated, resulting in polyglycine chains on the gamma-carboxyl group. Glycylation is mainly limited to tubulin incorporated into axonemes (cilia and flagella) whereas glutamylation is prevalent in neuronal cells, centrioles, axonemes, and the mitotic spindle. Both modifications can coexist on the same protein on adjacent residues, and lowering polyglycylation levels increases polyglutamylation, and reciprocally. Cilia and flagella glycylation is required for their stability and maintenance. Flagella glycylation controls sperm motility. In terms of processing, some glutamate residues at the C-terminus are polyglutamylated, resulting in polyglutamate chains on the gamma-carboxyl group. Polyglutamylation plays a key role in microtubule severing by spastin (SPAST). SPAST preferentially recognizes and acts on microtubules decorated with short polyglutamate tails: severing activity by SPAST increases as the number of glutamates per tubulin rises from one to eight, but decreases beyond this glutamylation threshold. Glutamylation is also involved in cilia motility. Post-translationally, phosphorylated on Ser-172 by CDK1 during the cell cycle, from metaphase to telophase, but not in interphase. This phosphorylation inhibits tubulin incorporation into microtubules.

The protein localises to the cytoplasm. It is found in the cytoskeleton. Tubulin is the major constituent of microtubules, a cylinder consisting of laterally associated linear protofilaments composed of alpha- and beta-tubulin heterodimers. Microtubules grow by the addition of GTP-tubulin dimers to the microtubule end, where a stabilizing cap forms. Below the cap, tubulin dimers are in GDP-bound state, owing to GTPase activity of alpha-tubulin. The chain is Tubulin beta-1 chain (Tubb1) from Mus musculus (Mouse).